Here is a 92-residue protein sequence, read N- to C-terminus: Small ribosomal subunit protein bS20 (92 aa).

The disordered stretch occupies residues 1-25 (MANSAQARKRARQAAKANSHNSALR).

This sequence belongs to the bacterial ribosomal protein bS20 family.

Binds directly to 16S ribosomal RNA. In Paraburkholderia phytofirmans (strain DSM 17436 / LMG 22146 / PsJN) (Burkholderia phytofirmans), this protein is Small ribosomal subunit protein bS20.